The following is a 196-amino-acid chain: Rac-like GTP-binding protein ARAC5 (196 aa).

16–21 (AVGKTC) contacts GTP. Residues 35-43 (YVPTVFDNF) carry the Effector region motif. GTP contacts are provided by residues 119-121 (KLD) and 159-161 (SSK). Cys-193 is subject to Cysteine methyl ester. A lipid anchor (S-geranylgeranyl cysteine) is attached at Cys-193. Residues 194 to 196 (VFL) constitute a propeptide, removed in mature form.

This sequence belongs to the small GTPase superfamily. Rho family. Interacts with GDI1 and ROPGEF8 homodimer. Binds to SPK1. Ubiquitous. Preferentially expressed at the tip of root hairs.

It localises to the cytoplasm. The protein localises to the membrane. It is found in the cell membrane. Its function is as follows. Involved in cell polarity control during the actin-dependent tip growth of root hairs, thus regulating root hair length and root hair initiation. Inactive GDP-bound Rho GTPases reside in the cytosol, are found in a complex with Rho GDP-dissociation inhibitors (Rho GDIs), and are released from the GDI protein in order to translocate to membranes upon activation. This is Rac-like GTP-binding protein ARAC5 from Arabidopsis thaliana (Mouse-ear cress).